The sequence spans 248 residues: 3-deoxy-manno-octulosonate cytidylyltransferase (248 aa).

The protein belongs to the KdsB family.

It is found in the cytoplasm. The enzyme catalyses 3-deoxy-alpha-D-manno-oct-2-ulosonate + CTP = CMP-3-deoxy-beta-D-manno-octulosonate + diphosphate. It participates in nucleotide-sugar biosynthesis; CMP-3-deoxy-D-manno-octulosonate biosynthesis; CMP-3-deoxy-D-manno-octulosonate from 3-deoxy-D-manno-octulosonate and CTP: step 1/1. The protein operates within bacterial outer membrane biogenesis; lipopolysaccharide biosynthesis. In terms of biological role, activates KDO (a required 8-carbon sugar) for incorporation into bacterial lipopolysaccharide in Gram-negative bacteria. The polypeptide is 3-deoxy-manno-octulosonate cytidylyltransferase (Escherichia coli O127:H6 (strain E2348/69 / EPEC)).